Reading from the N-terminus, the 496-residue chain is Lysine--tRNA ligase (496 aa).

Residues E409 and E416 each contribute to the Mg(2+) site.

The protein belongs to the class-II aminoacyl-tRNA synthetase family. Homodimer. Mg(2+) is required as a cofactor.

The protein localises to the cytoplasm. The enzyme catalyses tRNA(Lys) + L-lysine + ATP = L-lysyl-tRNA(Lys) + AMP + diphosphate. The chain is Lysine--tRNA ligase from Streptococcus gordonii (strain Challis / ATCC 35105 / BCRC 15272 / CH1 / DL1 / V288).